Consider the following 586-residue polypeptide: MIVMIIKNLFVCNSQEILKEYKFNAVGVNIILGEKREDHEETNGVGKSTMIECISFLLGKTISNFYTTNEILLNKNVFIVLNVEIDGNQVFLARSFNSPKHGYTLHDTSLTFNLEEWKKVSISVYKKFIEKEILKGEKEDITFAALREYIIRDEKTGFNDIVLPNRGGLKQYKLLNYLFTLPTHTEKNIKVFRDKIEKLNSEIKLIESMNINIGDLKVKEDELINEIEDYNRVIYQTKTANKYNNDTNRYSEIKSELNKIQNEIFENEHICKQYQRNIDDLNKKVTKIKELENIEKFYEDIVGFFPEEVKQNYNKVQEFYNFMVESRGSYFKDKIVKIQADLKKLNIKKQGLTEQLESSARILKSNNFIEDISIVMEEQRRKEIELAEVRLRISDYDKKNHIFDKINELQHEILRVNSMYYDEFQSYSAIVSELKKLFNNLMDVTYNQHGFLDFEYDNRISNAKQSTTGRIKISCSIPDERSHGRLHMKINIFDLTWFLYRCINKCSLNILIHDGSYSNPDPHVKGTLLKHINSSLLENRIGQYFVTINKNELLLDDLQELESKGMIVAKLDRNNEDKNRFFGFRF.

2 coiled-coil regions span residues 183 to 293 (THTE…ELEN) and 331 to 400 (FKDK…DKKN).

This is an uncharacterized protein from Bacillus subtilis (strain 168).